Here is a 309-residue protein sequence, read N- to C-terminus: Probable manganese-dependent inorganic pyrophosphatase (309 aa).

Residues histidine 9, aspartate 13, aspartate 15, aspartate 75, histidine 97, and aspartate 149 each coordinate Mn(2+).

Belongs to the PPase class C family. Requires Mn(2+) as cofactor.

The protein localises to the cytoplasm. It catalyses the reaction diphosphate + H2O = 2 phosphate + H(+). In Bacillus cereus (strain ZK / E33L), this protein is Probable manganese-dependent inorganic pyrophosphatase.